Here is a 335-residue protein sequence, read N- to C-terminus: DNA polymerase beta (335 aa).

Residue K41 forms a Glycyl lysine isopeptide (Lys-Gly) (interchain with G-Cter in ubiquitin) linkage. Position 60 (K60) interacts with K(+). K60 lines the Na(+) pocket. A Glycyl lysine isopeptide (Lys-Gly) (interchain with G-Cter in ubiquitin) cross-link involves residue K61. K(+) contacts are provided by L62 and V65. Na(+) is bound by residues L62 and V65. K72 serves as the catalytic Nucleophile; Schiff-base intermediate with DNA; for 5'-dRP lyase activity. K72 bears the N6-acetyllysine mark. A Glycyl lysine isopeptide (Lys-Gly) (interchain with G-Cter in ubiquitin) cross-link involves residue K81. R83 bears the Omega-N-methylarginine; by PRMT6 mark. K(+) is bound by residues T101, V103, and I106. Positions 101, 103, and 106 each coordinate Na(+). Residue R149 participates in a 2'-deoxyribonucleoside 5'-triphosphate binding. R152 is modified (omega-N-methylarginine; by PRMT6). Residues S180, R183, G189, and D190 each coordinate a 2'-deoxyribonucleoside 5'-triphosphate. Positions 183–192 (RGAESSGDMD) are DNA-binding. Mg(2+)-binding residues include D190, D192, and D256.

Belongs to the DNA polymerase type-X family. As to quaternary structure, monomer. Binds single-stranded DNA (ssDNA). Interacts with APEX1, LIG1, LIG3, FEN1, PCNA and XRCC1. Interacts with HUWE1/ARF-BP1, STUB1/CHIP and USP47. Interacts with FAM168A. It depends on Mg(2+) as a cofactor. Post-translationally, methylation by PRMT6 stimulates the polymerase activity by enhancing DNA binding and processivity. Ubiquitinated at Lys-41, Lys-61 and Lys-81: monoubiquitinated by HUWE1/ARF-BP1. Monoubiquitinated protein is then the target of STUB1/CHIP, which catalyzes polyubiquitination from monoubiquitin, leading to degradation by the proteasome. USP47 mediates the deubiquitination of monoubiquitinated protein, preventing polyubiquitination by STUB1/CHIP and its subsequent degradation.

It is found in the nucleus. It localises to the cytoplasm. It catalyses the reaction DNA(n) + a 2'-deoxyribonucleoside 5'-triphosphate = DNA(n+1) + diphosphate. The enzyme catalyses a 5'-end 2'-deoxyribose-2'-deoxyribonucleotide-DNA = (2E,4S)-4-hydroxypenten-2-al-5-phosphate + a 5'-end 5'-phospho-2'-deoxyribonucleoside-DNA + H(+). The catalysed reaction is 2'-deoxyribonucleotide-(2'-deoxyribose 5'-phosphate)-2'-deoxyribonucleotide-DNA = a 3'-end 2'-deoxyribonucleotide-(2,3-dehydro-2,3-deoxyribose 5'-phosphate)-DNA + a 5'-end 5'-phospho-2'-deoxyribonucleoside-DNA + H(+). Its function is as follows. Repair polymerase that plays a key role in base-excision repair. During this process, the damaged base is excised by specific DNA glycosylases, the DNA backbone is nicked at the abasic site by an apurinic/apyrimidic (AP) endonuclease, and POLB removes 5'-deoxyribose-phosphate from the preincised AP site acting as a 5'-deoxyribose-phosphate lyase (5'-dRP lyase); through its DNA polymerase activity, it adds one nucleotide to the 3' end of the arising single-nucleotide gap. Conducts 'gap-filling' DNA synthesis in a stepwise distributive fashion rather than in a processive fashion as for other DNA polymerases. It is also able to cleave sugar-phosphate bonds 3' to an intact AP site, acting as an AP lyase. This Rattus norvegicus (Rat) protein is DNA polymerase beta (Polb).